A 288-amino-acid polypeptide reads, in one-letter code: tRNA dimethylallyltransferase (288 aa).

2–9 (GPTAAGKS) lines the ATP pocket. Residue 4 to 9 (TAAGKS) participates in substrate binding. Positions 27 to 30 (DSMQ) are interaction with substrate tRNA.

It belongs to the IPP transferase family. As to quaternary structure, monomer. Mg(2+) is required as a cofactor.

It carries out the reaction adenosine(37) in tRNA + dimethylallyl diphosphate = N(6)-dimethylallyladenosine(37) in tRNA + diphosphate. Functionally, catalyzes the transfer of a dimethylallyl group onto the adenine at position 37 in tRNAs that read codons beginning with uridine, leading to the formation of N6-(dimethylallyl)adenosine (i(6)A). The polypeptide is tRNA dimethylallyltransferase (Frankia alni (strain DSM 45986 / CECT 9034 / ACN14a)).